Consider the following 48-residue polypeptide: Large ribosomal subunit protein bL32 (48 aa).

Positions 24–48 (LPMPIKDKDGSYKMPHRVNPVTKEY) are disordered.

Belongs to the bacterial ribosomal protein bL32 family.

The protein is Large ribosomal subunit protein bL32 of Campylobacter lari (strain RM2100 / D67 / ATCC BAA-1060).